Here is a 118-residue protein sequence, read N- to C-terminus: Small ribosomal subunit protein uS13 (118 aa).

A disordered region spans residues 95–118 (LPLRGQRTRTNARTRKGPRKAIKK).

The protein belongs to the universal ribosomal protein uS13 family. Part of the 30S ribosomal subunit. Forms a loose heterodimer with protein S19. Forms two bridges to the 50S subunit in the 70S ribosome.

Functionally, located at the top of the head of the 30S subunit, it contacts several helices of the 16S rRNA. In the 70S ribosome it contacts the 23S rRNA (bridge B1a) and protein L5 of the 50S subunit (bridge B1b), connecting the 2 subunits; these bridges are implicated in subunit movement. Contacts the tRNAs in the A and P-sites. In Xylella fastidiosa (strain 9a5c), this protein is Small ribosomal subunit protein uS13.